The chain runs to 213 residues: Histone H1 (213 aa).

Positions 1–25 (MAAATASAAATPAKKAAPKKPAAAP) are enriched in low complexity. Disordered stretches follow at residues 1–30 (MAAA…HPSY) and 81–213 (GEFV…AKSS). Residues 26–97 (EHPSYKEMLT…GPSGTVKLAK (72 aa)) enclose the H15 domain. Composition is skewed to low complexity over residues 102–113 (AAAPKKPAAKKA), 123–137 (KKAA…PKSA), 157–176 (KKAA…APVK), and 203–213 (PKKAATPAKSS).

It belongs to the histone H1/H5 family.

It is found in the nucleus. Its subcellular location is the chromosome. Functionally, could act as an H1-type linker histone. The sequence is that of Histone H1 from Ascobolus immersus.